Consider the following 471-residue polypeptide: Neuraminidase (471 aa).

Topologically, residues 1-6 are intravirion; that stretch reads MNPNQK. The helical transmembrane segment at 7-27 threads the bilayer; the sequence is IICISATGMTLSVVSLLIGIA. The interval 11–33 is involved in apical transport and lipid raft association; it reads SATGMTLSVVSLLIGIANLGLNI. The Virion surface segment spans residues 28–471; sequence NLGLNIGLHY…HDGAEIIYFK (444 aa). Residues 36–89 are hypervariable stalk region; sequence HYKVGDTPDVNTPNVNGTNSTTTTIINNNTQNNFTNITNIIHNKNEERTFLNLT. Asparagine 51, asparagine 54, asparagine 63, asparagine 68, asparagine 71, and asparagine 87 each carry an N-linked (GlcNAc...) asparagine; by host glycan. The interval 92-471 is head of neuraminidase; that stretch reads LCEVNSWHIL…HDGAEIIYFK (380 aa). Intrachain disulfides connect cysteine 93–cysteine 420, cysteine 125–cysteine 130, cysteine 185–cysteine 232, cysteine 234–cysteine 239, cysteine 280–cysteine 293, cysteine 282–cysteine 291, cysteine 320–cysteine 338, and cysteine 424–cysteine 450. Position 119 (arginine 119) interacts with substrate. A glycan (N-linked (GlcNAc...) asparagine; by host) is linked at asparagine 147. Residue aspartate 152 is the Proton donor/acceptor of the active site. Arginine 153 serves as a coordination point for substrate. Asparagine 202 carries an N-linked (GlcNAc...) asparagine; by host glycan. 278-279 serves as a coordination point for substrate; that stretch reads EE. Residue arginine 294 coordinates substrate. Residues aspartate 295, glycine 299, and aspartate 326 each coordinate Ca(2+). Arginine 373 serves as a coordination point for substrate. Residue asparagine 403 is glycosylated (N-linked (GlcNAc...) asparagine; by host). The active-site Nucleophile is the tyrosine 407.

The protein belongs to the glycosyl hydrolase 34 family. Homotetramer. Requires Ca(2+) as cofactor. Post-translationally, N-glycosylated.

The protein resides in the virion membrane. Its subcellular location is the host apical cell membrane. It catalyses the reaction Hydrolysis of alpha-(2-&gt;3)-, alpha-(2-&gt;6)-, alpha-(2-&gt;8)- glycosidic linkages of terminal sialic acid residues in oligosaccharides, glycoproteins, glycolipids, colominic acid and synthetic substrates.. Its activity is regulated as follows. Inhibited by the neuraminidase inhibitors zanamivir (Relenza) and oseltamivir (Tamiflu). These drugs interfere with the release of progeny virus from infected cells and are effective against all influenza strains. Resistance to neuraminidase inhibitors is quite rare. Functionally, catalyzes the removal of terminal sialic acid residues from viral and cellular glycoconjugates. Cleaves off the terminal sialic acids on the glycosylated HA during virus budding to facilitate virus release. Additionally helps virus spread through the circulation by further removing sialic acids from the cell surface. These cleavages prevent self-aggregation and ensure the efficient spread of the progeny virus from cell to cell. Otherwise, infection would be limited to one round of replication. Described as a receptor-destroying enzyme because it cleaves a terminal sialic acid from the cellular receptors. May facilitate viral invasion of the upper airways by cleaving the sialic acid moieties on the mucin of the airway epithelial cells. Likely to plays a role in the budding process through its association with lipid rafts during intracellular transport. May additionally display a raft-association independent effect on budding. Plays a role in the determination of host range restriction on replication and virulence. Sialidase activity in late endosome/lysosome traffic seems to enhance virus replication. The sequence is that of Neuraminidase from Influenza A virus (strain A/Gull/Maryland/704/1977 H13N6).